A 266-amino-acid polypeptide reads, in one-letter code: MDLGVAAILGVVQGISEWLPISSKTQIMLVSIWLLNASPEYAYSLGLFLEAASVLAALIYFRGVYLKALRGFVGDAEGRRWLVYILVTTLVTAVVGLPLYYVARKWLVVGHSAGFLMIVLGLAVVLNAVFLQRARFSAGLKAFDNMSLRDMAIVGIAQAVSVLPGLSRSGATVTALLLLGYKPEEAFRASFVLVPVAGLGATALAYLSEGGAVATAEALLAMAIGIVISIITIKALLEFAKSKHVVLVNVVIGLLAIAGGLLRIIF.

Transmembrane regions (helical) follow at residues 41–61 (YAYS…LIYF), 82–102 (LVYI…LYYV), 106–126 (WLVV…AVVL), 159–179 (AVSV…LLLL), 191–211 (FVLV…SEGG), 213–233 (VATA…IITI), and 246–266 (VLVN…RIIF).

This sequence belongs to the UppP family.

It localises to the cell membrane. It catalyses the reaction di-trans,octa-cis-undecaprenyl diphosphate + H2O = di-trans,octa-cis-undecaprenyl phosphate + phosphate + H(+). Functionally, catalyzes the dephosphorylation of undecaprenyl diphosphate (UPP). In Pyrobaculum aerophilum (strain ATCC 51768 / DSM 7523 / JCM 9630 / CIP 104966 / NBRC 100827 / IM2), this protein is Undecaprenyl-diphosphatase.